Consider the following 189-residue polypeptide: Cytidylate kinase (189 aa).

7–15 serves as a coordination point for ATP; the sequence is GPPGSGKTS.

The protein belongs to the cytidylate kinase family. Type 2 subfamily.

The protein localises to the cytoplasm. It catalyses the reaction CMP + ATP = CDP + ADP. It carries out the reaction dCMP + ATP = dCDP + ADP. This is Cytidylate kinase from Saccharolobus islandicus (strain L.S.2.15 / Lassen #1) (Sulfolobus islandicus).